The sequence spans 366 residues: L-idonate 5-dehydrogenase (366 aa).

Zn(2+) is bound by residues Cys56, His81, Cys111, Cys114, Cys117, Cys125, and Glu167.

The protein belongs to the zinc-containing alcohol dehydrogenase family. It depends on Zn(2+) as a cofactor.

It carries out the reaction L-idonate + NAD(+) = 5-dehydro-D-gluconate + NADH + H(+). It functions in the pathway carbohydrate acid metabolism; L-idonate degradation. Functionally, involved in the catabolism of ascorbate to tartrate. The enzyme has no activity with NADP(+). The polypeptide is L-idonate 5-dehydrogenase (Vitis vinifera (Grape)).